A 200-amino-acid polypeptide reads, in one-letter code: Large ribosomal subunit protein uL4 (200 aa).

Residues 43–70 are disordered; that stretch reads RAQKTRAEVSGSGKKPWRQKGTGRARSG.

The protein belongs to the universal ribosomal protein uL4 family. In terms of assembly, part of the 50S ribosomal subunit.

In terms of biological role, one of the primary rRNA binding proteins, this protein initially binds near the 5'-end of the 23S rRNA. It is important during the early stages of 50S assembly. It makes multiple contacts with different domains of the 23S rRNA in the assembled 50S subunit and ribosome. Functionally, forms part of the polypeptide exit tunnel. This Glaesserella parasuis serovar 5 (strain SH0165) (Haemophilus parasuis) protein is Large ribosomal subunit protein uL4.